A 225-amino-acid chain; its full sequence is uncharacterized protein (225 aa).

6 helical membrane passes run 1–21 (MFIG…AKKV), 31–51 (SPLL…NVPY), 56–76 (LGGG…AIPL), 88–108 (VEII…TALI), 145–165 (VTAV…PMVI), and 205–225 (VSMI…LSFM).

This sequence belongs to the YohK (E.coli)/YwbG (IPA-22R) (B.subtilis) family.

The protein localises to the cell membrane. This is an uncharacterized protein from Bacillus subtilis (strain 168).